The sequence spans 2025 residues: Pericentriolar material 1 protein (2025 aa).

A disordered region spans residues 1–91; the sequence is MATGGGPFEE…TFPHSRYMTQ (91 aa). An N-acetylalanine modification is found at Ala-2. Positions 2 to 1458 are mediates interaction with DZIP1; sequence ATGGGPFEEV…TWVASNSELT (1457 aa). Ser-65, Ser-68, Ser-69, Ser-93, Ser-110, Ser-116, Ser-119, and Ser-159 each carry phosphoserine. The interval 111–140 is disordered; it reads DLDQRSIGSDSQGRATAANNKRQLSENRKP. Residues 116-132 show a composition bias toward polar residues; that stretch reads SIGSDSQGRATAANNKR. The stretch at 218-301 forms a coiled coil; the sequence is KASSMREDLV…QLRALQGRQA (84 aa). The disordered stretch occupies residues 354 to 390; that stretch reads RDSQPPAVPDNRRQAESLSLTREISQSRNPSVSEHLP. The span at 369–385 shows a compositional bias: polar residues; the sequence is ESLSLTREISQSRNPSV. Ser-370 is subject to Phosphoserine. Residue Ser-372 is modified to Phosphoserine; by PLK4. Ser-384 is modified (phosphoserine). Residue Lys-399 is modified to N6-acetyllysine. 2 coiled-coil regions span residues 399–426 and 492–518; these read KMRV…QHLN and AEKL…YEQT. Disordered regions lie at residues 528–553 and 565–586; these read ENTK…VTNI and VNTN…VNSN. The span at 531 to 540 shows a compositional bias: acidic residues; the sequence is KDEETEESEY. Position 593 is a phosphoserine (Ser-593). The tract at residues 620–654 is disordered; the sequence is AHGEDEEEEVEEEGVSGASLSSRRSSLVDEAPEDE. A compositionally biased stretch (acidic residues) spans 623–633; that stretch reads EDEEEEVEEEG. Residues 634–644 are compositionally biased toward low complexity; the sequence is VSGASLSSRRS. Ser-644 carries the post-translational modification Phosphoserine. Coiled coils occupy residues 652–772 and 822–856; these read EDEE…PDLQ and SDMR…GLAE. A Phosphothreonine modification is found at Thr-857. Phosphoserine occurs at positions 859, 864, 867, and 870. 2 disordered regions span residues 866–885 and 913–940; these read RSDG…EKTM and TDEE…NQNS. The segment covering 870–879 has biased composition (polar residues); sequence SENLCTPQQS. Position 875 is a phosphothreonine (Thr-875). A phosphoserine mark is found at Ser-957, Ser-974, Ser-985, and Ser-988. Coiled coils occupy residues 985-1017 and 1061-1086; these read SELS…CQTL and QLTW…QNQH. Disordered regions lie at residues 1081 to 1105 and 1149 to 1213; these read RQQN…PSSP and FSQN…YDQE. Residues 1086–1096 show a composition bias toward basic and acidic residues; that stretch reads HPEKPRSKERG. The segment covering 1149-1169 has biased composition (polar residues); that stretch reads FSQNVSTPTEQQQPLAQNPSG. A phosphoserine mark is found at Ser-1182 and Ser-1185. Basic and acidic residues predominate over residues 1189–1198; sequence EKQRNQKQPE. Residues Ser-1228, Ser-1254, Ser-1257, Ser-1259, and Ser-1260 each carry the phosphoserine modification. The tract at residues 1230–1310 is disordered; sequence EKATNSNRKN…STQLKSRVKN (81 aa). Over residues 1268–1285 the composition is skewed to polar residues; sequence TTVTKTFKTRKASAQASL. 2 positions are modified to phosphoserine: Ser-1315 and Ser-1317. The tract at residues 1319–1338 is disordered; that stretch reads SSTCEPCKNRNRHSAQTEEP. Phosphothreonine is present on Thr-1466. A phosphoserine mark is found at Ser-1571, Ser-1695, Ser-1729, Ser-1766, Ser-1769, Ser-1777, and Ser-1783. Residues 1720–1943 are disordered; that stretch reads KRILEGDHGS…AGSPDTESPV (224 aa). Residues 1756–1768 show a composition bias toward basic and acidic residues; it reads YDAKGPKNVRSDV. The segment covering 1784–1798 has biased composition (polar residues); it reads INLSKAESQALTNYG. Residues 1800–1816 show a composition bias toward acidic residues; that stretch reads GEDENEDEEMEDFEESP. Polar residues-rich tracts occupy residues 1818–1828, 1849–1858, 1879–1901, and 1925–1934; these read DIQTSLQANTE, ESTNVPSDQE, ENEQ…SSKQ, and AQETPESSLA. Phosphoserine occurs at positions 1959 and 1978.

Belongs to the PCM1 family. As to quaternary structure, self-associates. Interacts with BBS4, BBS8, CETN3, HAP1, NDE1, NDEL1, MAP1LC3B, GABARAPAL2, and GABARAP. Interacts with CEP131; the interaction increases in response to ultraviolet light (UV) radiation. Associates with microtubule; association to microtubule is reduced in response to cellular stress, such as ultraviolet light (UV) radiation or heat shock, in a process that requires p38 MAP kinase signaling. Interacts with C2CD3. Interacts with CFAP263. Interacts with SSX2IP. Interacts with CCDC13. Interacts with CEP290. Interacts with PARD6A. Interacts with KIAA0753/OFIP, CEP20/FOR20 and OFD1; the interaction with CEP20/FOR20 and OFD1 may be mediated by KIAA0753/OFIP. Interacts with CCDC66. Interacts with CCDC61. Interacts with DZIP1; localizes DZIP1 and the associated BBSome to centriolar satellite. Interacts with CSTPP1, TTLL1, TPGS1 and LRRC49. Interacts with CFAP53. In terms of processing, ubiquitinated. Undergoes monoubiquitination catalyzed by the E3 ubiquitin-protein ligase MIB1 in proliferating cells, preventing cilia formation. Monoubiquitination by MIB1 is inhibited in response to cellular stress, such as ultraviolet light (UV) radiation or heat shock, resulting in cilia formation initiation. Post-translationally, phosphorylated on multiple serine and threonine residues by DYRK3 during the G2-to-M transition, after the nuclear-envelope breakdown. Phosphorylation by DYRK3 promotes disassembly of pericentriolar material. Phosphorylation at Ser-372 mediated by PLK4 is required to maintain the integrity of centriolar satellites. Expressed in the hippocampus and dentate gyrus, the columnar epithelial cells of bronchioles, the olfactory epithelium, the pericardium and the inner segment of the retina.

It localises to the cytoplasm. It is found in the cytoskeleton. The protein localises to the microtubule organizing center. Its subcellular location is the centrosome. The protein resides in the cytoplasmic granule. It localises to the centriolar satellite. It is found in the cilium basal body. In terms of biological role, required for centrosome assembly and function. Essential for the correct localization of several centrosomal proteins including CEP250, CETN3, PCNT and NEK2. Required to anchor microtubules to the centrosome. Also involved in cilium biogenesis by recruiting the BBSome, a ciliary protein complex involved in cilium biogenesis, to the centriolar satellites. Recruits the tubulin polyglutamylase complex (TPGC) to centriolar satellites. This chain is Pericentriolar material 1 protein, found in Mus musculus (Mouse).